The chain runs to 120 residues: Large ribosomal subunit protein uL18 (120 aa).

Belongs to the universal ribosomal protein uL18 family. In terms of assembly, part of the 50S ribosomal subunit; part of the 5S rRNA/L5/L18/L25 subcomplex. Contacts the 5S and 23S rRNAs.

This is one of the proteins that bind and probably mediate the attachment of the 5S RNA into the large ribosomal subunit, where it forms part of the central protuberance. The protein is Large ribosomal subunit protein uL18 of Bacillus cereus (strain G9842).